Here is a 760-residue protein sequence, read N- to C-terminus: Penicillin-binding protein 1B (760 aa).

Over 1–8 the chain is Cytoplasmic; it reads MFFNFKKY. A helical; Signal-anchor for type II membrane protein membrane pass occupies residues 9–29; sequence FLIKVFFFVLILTLCYGLYLY. The Extracellular segment spans residues 30–760; sequence VKINRFINGK…NFLFWLKNLF (731 aa). Residues 136–308 form a transglycosylase region; that stretch reads FRLEPKLIAM…SLYSPWTNPN (173 aa). Glu174 functions as the Proton donor; for transglycosylase activity in the catalytic mechanism. The segment at 392-684 is transpeptidase; it reads EQAVKIEIPI…SSGAMQIYKR (293 aa). Ser451 functions as the Acyl-ester intermediate; for transpeptidase activity in the catalytic mechanism.

In the N-terminal section; belongs to the glycosyltransferase 51 family. This sequence in the C-terminal section; belongs to the transpeptidase family.

The protein localises to the cell membrane. The catalysed reaction is [GlcNAc-(1-&gt;4)-Mur2Ac(oyl-L-Ala-gamma-D-Glu-L-Lys-D-Ala-D-Ala)](n)-di-trans,octa-cis-undecaprenyl diphosphate + beta-D-GlcNAc-(1-&gt;4)-Mur2Ac(oyl-L-Ala-gamma-D-Glu-L-Lys-D-Ala-D-Ala)-di-trans,octa-cis-undecaprenyl diphosphate = [GlcNAc-(1-&gt;4)-Mur2Ac(oyl-L-Ala-gamma-D-Glu-L-Lys-D-Ala-D-Ala)](n+1)-di-trans,octa-cis-undecaprenyl diphosphate + di-trans,octa-cis-undecaprenyl diphosphate + H(+). It carries out the reaction Preferential cleavage: (Ac)2-L-Lys-D-Ala-|-D-Ala. Also transpeptidation of peptidyl-alanyl moieties that are N-acyl substituents of D-alanine.. Its pathway is cell wall biogenesis; peptidoglycan biosynthesis. Functionally, cell wall formation. Synthesis of cross-linked peptidoglycan from the lipid intermediates. The enzyme has a penicillin-insensitive transglycosylase N-terminal domain (formation of linear glycan strands) and a penicillin-sensitive transpeptidase C-terminal domain (cross-linking of the peptide subunits). The sequence is that of Penicillin-binding protein 1B (mrcB) from Buchnera aphidicola subsp. Acyrthosiphon pisum (strain APS) (Acyrthosiphon pisum symbiotic bacterium).